The following is an 87-amino-acid chain: Toxin ICK-41 (87 aa).

The first 19 residues, Met-1–Gly-19, serve as a signal peptide directing secretion. Disulfide bonds link Cys-40–Cys-54, Cys-40–Cys-77, Cys-53–Cys-66, and Cys-80–Cys-87.

It belongs to the neurotoxin 27 (Jztx-72) family. ICK-41 subfamily. Expressed by the venom gland.

It is found in the secreted. Its function is as follows. Probable neurotoxin with ion channel impairing activity. The protein is Toxin ICK-41 of Trittame loki (Brush-footed trapdoor spider).